A 245-amino-acid chain; its full sequence is Homeobox protein goosecoid (245 aa).

The homeobox DNA-binding region spans 150-209; it reads KRRHRTIFTDEQLEALENLFQETKYPDVGTREQLARKVHLREEKVEVWFKNRRAKWRRQK. Residues 203–245 are disordered; it reads AKWRRQKRSSSEESENAQKWNKASKTSPEKRQEDGKSDLDSDS. The span at 219–228 shows a compositional bias: polar residues; that stretch reads AQKWNKASKT. Residues 229–245 are compositionally biased toward basic and acidic residues; sequence SPEKRQEDGKSDLDSDS.

Belongs to the paired homeobox family. Bicoid subfamily.

Its subcellular location is the nucleus. Involved in the development of the organizer region in the gastrula (Hensen node in chicken). The chain is Homeobox protein goosecoid (GSC) from Gallus gallus (Chicken).